Reading from the N-terminus, the 273-residue chain is Dermonecrotic toxin LarSicTox-alphaIB1b (273 aa).

H5 is a catalytic residue. Mg(2+)-binding residues include E25 and D27. H41 serves as the catalytic Nucleophile. 2 cysteine pairs are disulfide-bonded: C45-C51 and C47-C190. D85 is a Mg(2+) binding site. N250 is a glycosylation site (N-linked (GlcNAc...) asparagine).

The protein belongs to the arthropod phospholipase D family. Class II subfamily. The cofactor is Mg(2+). Expressed by the venom gland.

Its subcellular location is the secreted. It carries out the reaction an N-(acyl)-sphingosylphosphocholine = an N-(acyl)-sphingosyl-1,3-cyclic phosphate + choline. The catalysed reaction is an N-(acyl)-sphingosylphosphoethanolamine = an N-(acyl)-sphingosyl-1,3-cyclic phosphate + ethanolamine. The enzyme catalyses a 1-acyl-sn-glycero-3-phosphocholine = a 1-acyl-sn-glycero-2,3-cyclic phosphate + choline. It catalyses the reaction a 1-acyl-sn-glycero-3-phosphoethanolamine = a 1-acyl-sn-glycero-2,3-cyclic phosphate + ethanolamine. Functionally, dermonecrotic toxins cleave the phosphodiester linkage between the phosphate and headgroup of certain phospholipids (sphingolipid and lysolipid substrates), forming an alcohol (often choline) and a cyclic phosphate. This toxin acts on sphingomyelin (SM). It may also act on ceramide phosphoethanolamine (CPE), lysophosphatidylcholine (LPC) and lysophosphatidylethanolamine (LPE), but not on lysophosphatidylserine (LPS), and lysophosphatidylglycerol (LPG). It acts by transphosphatidylation, releasing exclusively cyclic phosphate products as second products. Induces dermonecrosis, hemolysis, increased vascular permeability, edema, inflammatory response, and platelet aggregation. The polypeptide is Dermonecrotic toxin LarSicTox-alphaIB1b (Loxosceles arizonica (Arizona brown spider)).